Consider the following 497-residue polypeptide: Probable gamma-aminobutyrate transaminase 2, mitochondrial (497 aa).

The transit peptide at 1-37 directs the protein to the mitochondrion; the sequence is MNLIKHAAFAASFQGETDCTSHASARKFSTSGSSPLL. 153-154 serves as a coordination point for pyridoxal 5'-phosphate; that stretch reads GS. Y186 contacts substrate. Pyridoxal 5'-phosphate is bound at residue D293. Residue K322 participates in substrate binding. An N6-(pyridoxal phosphate)lysine modification is found at K322.

This sequence belongs to the class-III pyridoxal-phosphate-dependent aminotransferase family.

Its subcellular location is the mitochondrion. The enzyme catalyses 4-aminobutanoate + pyruvate = succinate semialdehyde + L-alanine. It carries out the reaction 4-aminobutanoate + glyoxylate = succinate semialdehyde + glycine. In terms of biological role, transaminase that degrades gamma-amino butyric acid (GABA). The chain is Probable gamma-aminobutyrate transaminase 2, mitochondrial from Oryza sativa subsp. indica (Rice).